A 328-amino-acid chain; its full sequence is Galactinol synthase 10 (328 aa).

Lys106 is a catalytic residue. Mn(2+) is bound by residues Asp122, Asp124, and His248.

Belongs to the glycosyltransferase 8 family. Galactosyltransferase subfamily. The cofactor is a divalent metal cation.

The protein localises to the cytoplasm. It catalyses the reaction myo-inositol + UDP-alpha-D-galactose = alpha-D-galactosyl-(1-&gt;3)-1D-myo-inositol + UDP + H(+). Its function is as follows. Galactinol synthase involved in the biosynthesis of raffinose family oligosaccharides (RFOs) that function as osmoprotectants. May promote plant stress tolerance. The sequence is that of Galactinol synthase 10 (GOLS10) from Arabidopsis thaliana (Mouse-ear cress).